A 612-amino-acid polypeptide reads, in one-letter code: Peroxisomal targeting signal receptor (612 aa).

An N-acetylmethionine modification is found at M1. The disordered stretch occupies residues M1–K24. C6 participates in a covalent cross-link: Glycyl cysteine thioester (Cys-Gly) (interchain with G-Cter in ubiquitin). An amphipathic helix 1 (AH1) region spans residues S7–N29. Glycyl lysine isopeptide (Lys-Gly) (interchain with G-Cter in ubiquitin) cross-links involve residues K18 and K24. S61 is subject to Phosphoserine. The TPR 1 repeat unit spans residues N64–S97. An amphipathic helix 2 (AH2) region spans residues R70–T104. The short motif at W120–F124 is the WxxxF/Y motif 1 element. Residues S129–A151 form a disordered region. The interval P158–S174 is amphipathic helix 3 (AH3). Residues A182–Q202 are disordered. Positions W204–F208 match the WxxxF/Y motif 2 motif. The tract at residues F257 to P273 is amphipathic helix 4 (AH4). TPR repeat units lie at residues P313–H346, V347–N380, L381–R418, I419–D456, P457–D490, E491–F524, and V525–N558.

Belongs to the peroxisomal targeting signal receptor family. In terms of assembly, interacts (via WxxxF/Y and LVxEF motifs) with PEX14; promoting translocation through the PEX13-PEX14 docking complex. Post-translationally, monoubiquitinated at Cys-6 by PEX2 during PEX5 passage through the retrotranslocation channel: monoubiquitination acts as a signal for PEX5 extraction and is required for proper export from peroxisomes and recycling. Ubiquitination at Cys-6 is UBC4-independent but requires the presence of PEX4. When PEX5 recycling is compromised, polyubiquitinated at Lys-18 and Lys-24 by PEX10 during its passage through the retrotranslocation channel, leading to its degradation. Ubiquitination at Lys-18 and Lys-24 are UBC4-dependent. Monoubiquitination at Cys-6 and polyubiquitination at Lys-18 and Lys-24 are removed by UBP15 in the cytosol, resetting PEX5 for a subsequent import cycle.

It is found in the cytoplasm. The protein localises to the cytosol. The protein resides in the peroxisome matrix. Its function is as follows. Receptor that mediates peroxisomal import of proteins containing a C-terminal PTS1-type tripeptide peroxisomal targeting signal (SKL-type). Binds to cargo proteins containing a PTS1 peroxisomal targeting signal in the cytosol, and translocates them into the peroxisome matrix by passing through the PEX13-PEX14 docking complex along with cargo proteins. PEX5 receptor is then retrotranslocated into the cytosol, leading to release of bound cargo in the peroxisome matrix, and reset for a subsequent peroxisome import cycle. The chain is Peroxisomal targeting signal receptor from Saccharomyces cerevisiae (strain ATCC 204508 / S288c) (Baker's yeast).